Consider the following 304-residue polypeptide: tRNA pseudouridine synthase B (304 aa).

Catalysis depends on Asp-38, which acts as the Nucleophile.

Belongs to the pseudouridine synthase TruB family. Type 1 subfamily.

It carries out the reaction uridine(55) in tRNA = pseudouridine(55) in tRNA. Functionally, responsible for synthesis of pseudouridine from uracil-55 in the psi GC loop of transfer RNAs. This is tRNA pseudouridine synthase B from Geobacter sulfurreducens (strain ATCC 51573 / DSM 12127 / PCA).